A 194-amino-acid chain; its full sequence is uncharacterized protein (194 aa).

Residues 1–22 (MNKVTKTAIAGLLALFAGNAAA) form the signal peptide. A disulfide bridge links Cys38 with Cys78.

Belongs to the fimbrial protein family.

Its subcellular location is the fimbrium. Part of the yraHIJK fimbrial operon. Could contribute to adhesion to various surfaces in specific environmental niches. Increases adhesion to eukaryotic T24 bladder epithelial cells in the absence of fim operon. This is an uncharacterized protein from Escherichia coli (strain K12).